Here is a 362-residue protein sequence, read N- to C-terminus: NAD(P)H-quinone oxidoreductase subunit 1, chloroplastic (362 aa).

The next 8 membrane-spanning stretches (helical) occupy residues 31–51 (WVPL…LVIV), 99–119 (WLFT…YLVV), 132–152 (IGIF…LMSG), 178–198 (LAIC…VDIV), 206–226 (ILTW…IAAL), 268–288 (LVSG…PFAI), 303–323 (AFLG…AAIL), and 336–356 (LLDL…LLTA).

Belongs to the complex I subunit 1 family. In terms of assembly, NDH is composed of at least 16 different subunits, 5 of which are encoded in the nucleus.

It is found in the plastid. The protein localises to the chloroplast thylakoid membrane. It catalyses the reaction a plastoquinone + NADH + (n+1) H(+)(in) = a plastoquinol + NAD(+) + n H(+)(out). The catalysed reaction is a plastoquinone + NADPH + (n+1) H(+)(in) = a plastoquinol + NADP(+) + n H(+)(out). Functionally, NDH shuttles electrons from NAD(P)H:plastoquinone, via FMN and iron-sulfur (Fe-S) centers, to quinones in the photosynthetic chain and possibly in a chloroplast respiratory chain. The immediate electron acceptor for the enzyme in this species is believed to be plastoquinone. Couples the redox reaction to proton translocation, and thus conserves the redox energy in a proton gradient. This Nephroselmis olivacea (Green alga) protein is NAD(P)H-quinone oxidoreductase subunit 1, chloroplastic.